A 115-amino-acid chain; its full sequence is Phosphoribosyl-AMP cyclohydrolase (115 aa).

D80 provides a ligand contact to Mg(2+). Zn(2+) is bound at residue C81. D82 and D84 together coordinate Mg(2+). The Zn(2+) site is built by C97 and C104.

The protein belongs to the PRA-CH family. As to quaternary structure, homodimer. It depends on Mg(2+) as a cofactor. Zn(2+) serves as cofactor.

It localises to the cytoplasm. The catalysed reaction is 1-(5-phospho-beta-D-ribosyl)-5'-AMP + H2O = 1-(5-phospho-beta-D-ribosyl)-5-[(5-phospho-beta-D-ribosylamino)methylideneamino]imidazole-4-carboxamide. It participates in amino-acid biosynthesis; L-histidine biosynthesis; L-histidine from 5-phospho-alpha-D-ribose 1-diphosphate: step 3/9. Its function is as follows. Catalyzes the hydrolysis of the adenine ring of phosphoribosyl-AMP. This is Phosphoribosyl-AMP cyclohydrolase from Mycobacterium sp. (strain MCS).